The primary structure comprises 449 residues: Monoacylglycerol lipase (449 aa).

A Glycyl lysine isopeptide (Lys-Gly) (interchain with G-Cter in ubiquitin) cross-link involves residue Lys82. Positions 151 to 392 (PMLIILHGLT…LLLETSTGGH (242 aa)) constitute an AB hydrolase-1 domain. The GXSXG signature appears at 230-234 (GFSLG). Ser232 acts as the Nucleophile in catalysis. Residues Asp364 and His392 each act as charge relay system in the active site.

The protein belongs to the AB hydrolase superfamily. AB hydrolase 4 family.

The enzyme catalyses Hydrolyzes glycerol monoesters of long-chain fatty acids.. It carries out the reaction 1-hexadecanoylglycerol + H2O = glycerol + hexadecanoate + H(+). The catalysed reaction is 1-octadecanoylglycerol + H2O = octadecanoate + glycerol + H(+). It catalyses the reaction 1-(9Z-octadecenoyl)-glycerol + H2O = glycerol + (9Z)-octadecenoate + H(+). Functionally, converts monoacylglycerides (MAG) to free fatty acids and glycerol. Has a preference for palmitoyl-MAG. Does not play a significant role in ethyl ester biosynthesis. Also possesses ester hydrolase and low but persistent TAG lipase activity. The sequence is that of Monoacylglycerol lipase from Saccharomyces cerevisiae (strain ATCC 204508 / S288c) (Baker's yeast).